The chain runs to 635 residues: DNA mismatch repair protein MutL (635 aa).

Residues 352-380 form a disordered region; the sequence is KAALQRGWVPPGAGRPGEGGGRAAPPPWR.

This sequence belongs to the DNA mismatch repair MutL/HexB family.

This protein is involved in the repair of mismatches in DNA. It is required for dam-dependent methyl-directed DNA mismatch repair. May act as a 'molecular matchmaker', a protein that promotes the formation of a stable complex between two or more DNA-binding proteins in an ATP-dependent manner without itself being part of a final effector complex. The sequence is that of DNA mismatch repair protein MutL from Symbiobacterium thermophilum (strain DSM 24528 / JCM 14929 / IAM 14863 / T).